We begin with the raw amino-acid sequence, 625 residues long: Coagulation factor XI (625 aa).

An N-terminal signal peptide occupies residues 1–18 (MIFLYQVVHFILFTSVSG). Apple domains follow at residues 20 to 103 (CVTQ…FKQC), 110 to 193 (CNKD…LKSC), 200 to 283 (CIRD…LQSC), and 291 to 374 (CHSS…LRLC). 17 disulfide bridges follow: Cys-20–Cys-103, Cys-46–Cys-76, Cys-50–Cys-56, Cys-110–Cys-193, Cys-136–Cys-165, Cys-140–Cys-146, Cys-200–Cys-283, Cys-226–Cys-255, Cys-230–Cys-236, Cys-291–Cys-374, Cys-317–Cys-346, Cys-321–Cys-327, Cys-380–Cys-500, Cys-416–Cys-432, Cys-514–Cys-581, Cys-545–Cys-560, and Cys-571–Cys-599. Residues Asn-90 and Asn-126 are each glycosylated (N-linked (GlcNAc...) (complex) asparagine). Asn-163 carries an N-linked (GlcNAc...) (complex) asparagine; atypical glycan. One can recognise a Peptidase S1 domain in the interval 388–623 (IVGGTASVRG…YVDWILEKTQ (236 aa)). His-431 functions as the Charge relay system in the catalytic mechanism. An N-linked (GlcNAc...) (complex) asparagine glycan is attached at Asn-450. The Charge relay system role is filled by Asp-480. N-linked (GlcNAc...) (complex) asparagine glycosylation occurs at Asn-491. 547–550 (KRYR) contributes to the heparin binding site. The active-site Charge relay system is the Ser-575.

Belongs to the peptidase S1 family. Plasma kallikrein subfamily. Homodimer; disulfide-linked. Can form non-covalently bonded homodimers. After activation the heavy and light chains are also linked by a disulfide bond. Interacts (activated) with F9 (inactive and activated) in calcium-dependent manner. Forms a heterodimer with SERPINA5. Interacts with Anopheles gambiae D7L2. Interacts (activated) with guianensin, an anticoagulant protein from Simulium guianense saliva. N-glycosylated on both chains. N-glycosylated sites mainly consist of nonfucosylated sialylated biantennary (in high abundance) and/or triantennary (in low abundance) complex structures. Glycosylation at Asn-163 uses a rare non-canonical Asn-X-Cys glycosite. In terms of processing, activated by factor XIIa (or XII), which cleaves each polypeptide after Arg-387 into the light chain, which contains the active site, and the heavy chain, which associates with high molecular weight (HMW) kininogen. Activated by F12 (activated); the presence of negatively charged surfaces accelerates activation. Activated by F2 (thrombin); the presence of negatively charged surfaces, such as polyphosphate and dextran sulfate, strongly accelerates activation. Autoactivated; the presence of negatively charged surfaces, such as polyphosphate and dextran sulfate, accelerates autoactivation and autolysis. In terms of tissue distribution, isoform 2 is produced by platelets and megakaryocytes but absent from other blood cells.

It localises to the secreted. It carries out the reaction Selective cleavage of Arg-|-Ala and Arg-|-Val bonds in factor IX to form factor IXa.. Its activity is regulated as follows. Inhibited by SERPINA5. Factor XI triggers the middle phase of the intrinsic pathway of blood coagulation by activating factor IX. This Homo sapiens (Human) protein is Coagulation factor XI (F11).